A 191-amino-acid polypeptide reads, in one-letter code: uncharacterized protein (191 aa).

The protein to E.coli YecM.

This is an uncharacterized protein from Haemophilus influenzae (strain ATCC 51907 / DSM 11121 / KW20 / Rd).